The following is a 432-amino-acid chain: Glutamate-1-semialdehyde 2,1-aminomutase 1 (432 aa).

An N6-(pyridoxal phosphate)lysine modification is found at K268.

It belongs to the class-III pyridoxal-phosphate-dependent aminotransferase family. HemL subfamily. As to quaternary structure, homodimer. Pyridoxal 5'-phosphate is required as a cofactor.

It localises to the cytoplasm. The catalysed reaction is (S)-4-amino-5-oxopentanoate = 5-aminolevulinate. The protein operates within porphyrin-containing compound metabolism; protoporphyrin-IX biosynthesis; 5-aminolevulinate from L-glutamyl-tRNA(Glu): step 2/2. The chain is Glutamate-1-semialdehyde 2,1-aminomutase 1 from Bacillus mycoides (strain KBAB4) (Bacillus weihenstephanensis).